A 194-amino-acid chain; its full sequence is MNIEKAKRLAKEKLPEKRYNHSLRVAETAIKLAEIYDGDTSKVELAGVLHDFCKYDDLGKMYQIVRQYELGNDLLSYGSEILHGPVCAAIMEHEYGINDEEVLMAIKYHTTGRQQMTKTEKLIFIADYIEPGRTIPGVDDIRDMAYNQGSLDKTIYEISKRTVLFLIQKDITVYNKTIDCLNYYNYSDERIKDD.

In terms of domain architecture, HD spans 18 to 132; that stretch reads RYNHSLRVAE…IFIADYIEPG (115 aa). His-21 is a binding site for ADP. Positions 21, 50, and 51 each coordinate Fe cation. Residues 51 to 54, His-83, 109 to 110, Asp-127, Arg-133, and 172 to 177 each bind ADP; these read DFCK, HT, and TVYNKT. Asp-127 contributes to the Fe cation binding site.

This sequence belongs to the Ap4A hydrolase YqeK family. In terms of assembly, homodimer.

The enzyme catalyses P(1),P(4)-bis(5'-adenosyl) tetraphosphate + H2O = 2 ADP + 2 H(+). Its activity is regulated as follows. Inhibited by EDTA. Functionally, hydrolyzes diadenosine 5',5'''-P1,P4-tetraphosphate (Ap4A) to yield ADP. Can also hydrolyze Ap3A, Ap5A, Ap4G, Ap4U and Gp4G, always releasing ADP or GDP as one of the products, but it exhibits a marked preference for Ap4A, which is mainly exerted at the substrate affinity level. This Staphylococcus aureus (strain NCTC 8325 / PS 47) protein is Bis(5'-nucleosyl)-tetraphosphatase, symmetrical.